The sequence spans 232 residues: Flavin-dependent thymidylate synthase (232 aa).

Residues 1 to 204 (MKIALLQHTP…PTIFRDAGPG (204 aa)) enclose the ThyX domain. FAD is bound by residues Ser55, 79–81 (RHR), and Gln87. DUMP is bound by residues 76 to 79 (QLVR), 87 to 91 (QQSQR), and Arg143. Residues 79–89 (RHRIASYSQQS) carry the ThyX motif motif. FAD is bound by residues 159–161 (NAR) and His165. Arg170 contributes to the dUMP binding site. Residue Arg170 is the Involved in ionization of N3 of dUMP, leading to its activation of the active site.

It belongs to the thymidylate synthase ThyX family. Homotetramer. Requires FAD as cofactor.

The enzyme catalyses dUMP + (6R)-5,10-methylene-5,6,7,8-tetrahydrofolate + NADPH + H(+) = dTMP + (6S)-5,6,7,8-tetrahydrofolate + NADP(+). It functions in the pathway pyrimidine metabolism; dTTP biosynthesis. Catalyzes the reductive methylation of 2'-deoxyuridine-5'-monophosphate (dUMP) to 2'-deoxythymidine-5'-monophosphate (dTMP) while utilizing 5,10-methylenetetrahydrofolate (mTHF) as the methyl donor, and NADPH and FADH(2) as the reductant. The protein is Flavin-dependent thymidylate synthase of Geobacter sulfurreducens (strain ATCC 51573 / DSM 12127 / PCA).